A 343-amino-acid polypeptide reads, in one-letter code: uncharacterized protein (343 aa).

Residue 33–40 participates in ATP binding; that stretch reads GPKSSGKS.

The protein belongs to the archaeal ATPase family.

This is an uncharacterized protein from Methanocaldococcus jannaschii (strain ATCC 43067 / DSM 2661 / JAL-1 / JCM 10045 / NBRC 100440) (Methanococcus jannaschii).